We begin with the raw amino-acid sequence, 325 residues long: All-trans-nonaprenyl-diphosphate synthase (geranyl-diphosphate specific) (325 aa).

Lys-48, Arg-51, and His-81 together coordinate isopentenyl diphosphate. Residues Asp-88 and Asp-92 each coordinate Mg(2+). An an all-trans-polyprenyl diphosphate-binding site is contributed by Arg-97. Residue Arg-98 coordinates isopentenyl diphosphate. Positions 174, 175, 211, and 228 each coordinate an all-trans-polyprenyl diphosphate.

This sequence belongs to the FPP/GGPP synthase family. In terms of assembly, homodimer. Mg(2+) serves as cofactor.

It catalyses the reaction 7 isopentenyl diphosphate + (2E)-geranyl diphosphate = all-trans-nonaprenyl diphosphate + 7 diphosphate. Catalyzes the sequential condensation of isopentenyl diphosphate (IPP) with the allylic substrate to give solanesyl diphosphate. Could be important to determine the side chain length of ubiquinone. The protein is All-trans-nonaprenyl-diphosphate synthase (geranyl-diphosphate specific) (sdsA) of Rhodobacter capsulatus (Rhodopseudomonas capsulata).